We begin with the raw amino-acid sequence, 251 residues long: uncharacterized protein (251 aa).

Belongs to the methyltransferase superfamily.

The protein resides in the cytoplasm. It localises to the nucleus. Functionally, probable methyltransferase. This is an uncharacterized protein from Schizosaccharomyces pombe (strain 972 / ATCC 24843) (Fission yeast).